Consider the following 776-residue polypeptide: Cullin-1 (776 aa).

Omega-N-methylarginine is present on Arg-63. The Cullin neddylation domain occupies Asp-706 to Asp-766. Lys-720 is covalently cross-linked (Glycyl lysine isopeptide (Lys-Gly) (interchain with G-Cter in NEDD8)).

It belongs to the cullin family. Component of multiple Cul1-RING E3 ubiquitin-protein ligase complexes commonly known as SCF (SKP1-CUL1-F-box) complexes, consisting of CUL1, SKP1, RBX1 and a variable F-box domain-containing protein as substrate-specific subunit. Component of the SCF(FBXW11) complex containing FBXW11. Component of the SCF(SKP2) complex containing SKP2, in which it interacts directly with SKP1, SKP2 and RBX1. Component of the SCF(FBXW2) complex containing FBXW2. Component of the SCF(FBXO32) complex containing FBXO32. Component of the probable SCF(FBXO7) complex containing FBXO7. Component of the SCF(FBXO10) complex containing FBXO10. Component of the SCF(FBXO11) complex containing FBXO11. Component of the SCF(FBXO25) complex containing FBXO25. Component of the SCF(FBXO33) complex containing FBXO33. Component of the probable SCF(FBXO4) complex containing FBXO4. Component of the SCF(FBXO44) complex, composed of SKP1, CUL1 and FBXO44. Component of the SCF(BTRC) complex, composed of SKP1, CUL1 and BTRC. This complex binds phosphorylated NFKBIA. Part of a SCF complex consisting of CUL1, RBX1, SKP1 and FBXO2. Component of a SCF(SKP2)-like complex containing CUL1, SKP1, TRIM21 and SKP2. Component of the SCF(FBXO17) complex, composed of SKP1, CUL1 and FBXO17. Component of the SCF(FBXO27) complex, composed of SKP1, CUL1 and FBXO27. Component of the SCF(CCNF) complex consisting of CUL1, RBX1, SKP1 and CCNF. Interacts with CCNF. Component of the SCF(FBXL3) complex composed of CUL1, SKP1, RBX1 and FBXL3. Component of the SCF(FBXL21) complex composed of CUL1, SKP1, RBX1 and FBXL21. Component of the SCF(FBXO9) composed of CUL1, SKP1, RBX1 and FBXO9. Component of the SCF(FBXW7) composed of CUL1, SKP1, RBX1 and FBXW7. Component of the SCF(FBXO31) complex composed of CUL1, SKP1, RBX1 and FBXO31. Interacts with CHEK2; mediates CHEK2 ubiquitination and regulates its function. Part of a complex with TIP120A/CAND1 and RBX1. The unneddylated form interacts with TIP120A/CAND1 and the interaction mediates the exchange of the F-box substrate-specific subunit. Can self-associate. Interacts with FBXW8. Interacts with RNF7. Interacts with TRIM21. Interacts with COPS2. Interacts with DCUN1D1 and UBE2M. Interacts with DCUN1D3. Interacts with DCUN1D4. Identified in a complex with RBX1 and GLMN. Interacts with CEP68 as part of the SCF(FBXW11) complex; the interaction is probably mediated by FBXW11 and the complex also contains CDK5RAP2 and PCNT. Interacts (when neddylated) with ARIH1; leading to activate the E3 ligase activity of ARIH1. Interacts with COPS9. Interacts with UBXN1. Interacts with KAT7, probably as part of an SCF complex; the interaction mediates KAT7 ubiquitination. Interacts with NOTCH2. Part of a complex that contains DCUN1D5, CUL1 and RBX1; this interaction is bridged by CUL1. Interacts (unneddylated form) with DCUN1D1, DCUN1D2, DCUN1D3, DCUN1D4 and DCUN1D5; these interactions promote the cullin neddylation. Interacts (via the C-terminal domain) with CUL7; the interaction seems to be mediated by FBXW8; it is likely specific to FBXW8, but not other F-box proteins. Interacts with UBR2, as part of SCF(BTRC) complex; the interaction mediates 'Lys-48'-linked ubiquitination of UBR2 and is regulated by DUSP22 in the T-cell receptor signaling pathway. In terms of assembly, (Microbial infection) Interacts with murine cytomegalovirus M48. Neddylated; which enhances the ubiquitination activity of SCF. Neddylation prevents binding of the inhibitor CAND1. Neddylation leads to structural rearrangment in the complex that allows interaction between the E2 ubiquitin-conjugating enzyme and the acceptor ubiquitin. Deneddylated via its interaction with the COP9 signalosome (CSN) complex. In terms of processing, (Microbial infection) Deneddylated by murine cytomegalovirus M48 leading to a S-phase-like environment that is required for efficient replication of the viral genome. Embryo fibroblasts and embryo preadipocytes.

It functions in the pathway protein modification; protein ubiquitination. Functionally, core component of multiple cullin-RING-based SCF (SKP1-CUL1-F-box protein) E3 ubiquitin-protein ligase complexes, which mediate the ubiquitination of proteins involved in cell cycle progression, signal transduction and transcription. SCF complexes and ARIH1 collaborate in tandem to mediate ubiquitination of target proteins. In the SCF complex, serves as a rigid scaffold that organizes the SKP1-F-box protein and RBX1 subunits. May contribute to catalysis through positioning of the substrate and the ubiquitin-conjugating enzyme. The E3 ubiquitin-protein ligase activity of the complex is dependent on the neddylation of the cullin subunit and exchange of the substrate recognition component is mediated by TIP120A/CAND1. The functional specificity of the SCF complex depends on the F-box protein as substrate recognition component. SCF(BTRC) and SCF(FBXW11) direct ubiquitination of CTNNB1 and participate in Wnt signaling. SCF(FBXW11) directs ubiquitination of phosphorylated NFKBIA. SCF(BTRC) directs ubiquitination of NFKBIB, NFKBIE, ATF4, SMAD3, SMAD4, CDC25A, FBXO5 and probably NFKB2. SCF(BTRC) and/or SCF(FBXW11) direct ubiquitination of CEP68. SCF(SKP2) directs ubiquitination of phosphorylated CDKN1B/p27kip and is involved in regulation of G1/S transition. SCF(SKP2) directs ubiquitination of ORC1, CDT1, RBL2, ELF4, CDKN1A, RAG2, FOXO1A, and probably MYC and TAL1. SCF(FBXW7) directs ubiquitination of cyclin E, NOTCH1 released notch intracellular domain (NICD), and probably PSEN1. SCF(FBXW2) directs ubiquitination of GCM1. SCF(FBXO32) directs ubiquitination of MYOD1. SCF(FBXO7) directs ubiquitination of BIRC2 and DLGAP5. SCF(FBXO33) directs ubiquitination of YBX1. SCF(FBXO1) directs ubiquitination of BCL6 and DTL but does not seem to direct ubiquitination of TP53. SCF(BTRC) mediates the ubiquitination of NFKBIA at 'Lys-21' and 'Lys-22'; the degradation frees the associated NFKB1-RELA dimer to translocate into the nucleus and to activate transcription. SCF(CCNF) directs ubiquitination of CCP110. SCF(FBXL3) and SCF(FBXL21) direct ubiquitination of CRY1 and CRY2. SCF(FBXO9) directs ubiquitination of TTI1 and TELO2. SCF(FBXO10) directs ubiquitination of BCL2. Neddylated CUL1-RBX1 ubiquitinates p53/TP53 recruited by Cul7-RING(FBXW8) complex. SCF(BTRC) directs 'Lys-48'-linked ubiquitination of UBR2 in the T-cell receptor signaling pathway. The SCF(FBXO31) protein ligase complex specifically mediates the ubiquitination of proteins amidated at their C-terminus in response to oxidative stress. The protein is Cullin-1 (Cul1) of Mus musculus (Mouse).